A 363-amino-acid chain; its full sequence is MDNYTYSELLKSLQNKCDNIALIIKPEKIKQELERIEKEQEDPNFWQDVLKARDTNKEKVRLNRLLETYQKTKNSLDESVELFELAQNDNDETTLSLLYEEAPTLEHSVQKVEIEIMLSGENDASNAIITIQPGAGGTESQDWASILYRMYLRWAERRGFKSEILDYQDGEEAGIKGVAFIIKGENAYGYLKNENGVHRLVRISPFDANAKRHTSFASVQISPELDDDIDIEIDEKDVRYDYYRASGAGGQHVNKTESAVRITHFPTGIVVQCQNDRSQHKNKASALKMLKSKLYELELEKQQSSAKNEEKSEIGWGHQIRSYVLAPYQQVKDARSNIAYSNVEAILDGDIDAILEGVLIAKA.

Position 251 is an N5-methylglutamine (Gln251).

This sequence belongs to the prokaryotic/mitochondrial release factor family. In terms of processing, methylated by PrmC. Methylation increases the termination efficiency of RF2.

The protein resides in the cytoplasm. Peptide chain release factor 2 directs the termination of translation in response to the peptide chain termination codons UGA and UAA. This Helicobacter pylori (strain G27) protein is Peptide chain release factor 2.